Reading from the N-terminus, the 977-residue chain is Disks large-associated protein 3 (977 aa).

Positions 1–10 (MRGYHGDRGS) are enriched in basic and acidic residues. Disordered regions lie at residues 1-30 (MRGY…PAAR), 52-90 (AGLG…SSTF), 137-167 (FHTL…ESPS), 181-289 (AKSH…CLDA), 398-417 (AMGD…SPKA), and 529-582 (PGSS…SADG). Residues 53 to 73 (GLGHLSPEGPLSLSEGPSSVG) are compositionally biased toward low complexity. At S58 the chain carries Phosphoserine. The segment covering 74 to 85 (PEGGPGGVGAGG) has biased composition (gly residues). Over residues 189-201 (PGKRDYNGPKAEG) the composition is skewed to basic and acidic residues. Residues 202–212 (RSSSGGDSYSG) are compositionally biased toward low complexity. A compositionally biased stretch (basic residues) spans 221–245 (SHHHHHHHHHHHHQSRHGKRSKSKD). Over residues 258–271 (GWWSSDDNLDSDSG) the composition is skewed to low complexity. A phosphoserine mark is found at S404, S407, S410, and S414. Over residues 538–547 (APPPIPPGSQ) the composition is skewed to pro residues. 2 positions are modified to phosphoserine: S641 and S643. 2 disordered regions span residues 739 to 788 (EGYP…RTSP) and 906 to 939 (EEKK…RQRQ). Pro residues predominate over residues 754–763 (PGPPPVPAPG). 2 stretches are compositionally biased toward basic and acidic residues: residues 767–777 (GRRDSWMERGS) and 925–939 (PVKE…RQRQ). A phosphoserine mark is found at S930, S933, and S965.

Belongs to the SAPAP family. As to quaternary structure, interacts with DLG1 and DLG4/PSD-95. Expressed in most brain regions.

It is found in the cell membrane. The protein localises to the postsynaptic density. The protein resides in the synapse. Its function is as follows. May play a role in the molecular organization of synapses and neuronal cell signaling. Could be an adapter protein linking ion channel to the subsynaptic cytoskeleton. May induce enrichment of PSD-95/SAP90 at the plasma membrane. This chain is Disks large-associated protein 3 (Dlgap3), found in Rattus norvegicus (Rat).